A 362-amino-acid chain; its full sequence is Talin rod domain-containing protein 1 (362 aa).

The interval 1–26 (MASGSAGKPTGEAASPAPASAIGGAS) is disordered. Position 2 is an N-acetylalanine (Ala-2). A compositionally biased stretch (low complexity) spans 13–26 (AASPAPASAIGGAS).

May homodimerize. Interacts with F-actin.

Actin-binding protein which may have an oncogenic function and regulates cell proliferation, migration and invasion in cancer cells. In Homo sapiens (Human), this protein is Talin rod domain-containing protein 1.